A 157-amino-acid polypeptide reads, in one-letter code: Lipoprotein signal peptidase (157 aa).

3 helical membrane passes run 10 to 30 (LVFMGVFFLIFGVDQAIKYAI), 58 to 78 (FLEGGLKYLQILLILGLFIFL), and 84 to 104 (LFKNHAIEFGMVFGAGVSNVL). Residues Asp114 and Asp131 contribute to the active site. Residues 122-142 (FDFAIFNFADVMIDVGVGVLL) form a helical membrane-spanning segment.

This sequence belongs to the peptidase A8 family.

Its subcellular location is the cell inner membrane. It carries out the reaction Release of signal peptides from bacterial membrane prolipoproteins. Hydrolyzes -Xaa-Yaa-Zaa-|-(S,diacylglyceryl)Cys-, in which Xaa is hydrophobic (preferably Leu), and Yaa (Ala or Ser) and Zaa (Gly or Ala) have small, neutral side chains.. The protein operates within protein modification; lipoprotein biosynthesis (signal peptide cleavage). In terms of biological role, this protein specifically catalyzes the removal of signal peptides from prolipoproteins. The chain is Lipoprotein signal peptidase from Helicobacter pylori (strain ATCC 700392 / 26695) (Campylobacter pylori).